Reading from the N-terminus, the 326-residue chain is Vestitone reductase (326 aa).

NADP(+)-binding positions include 12–18 (GGTGFLG), Arg-37, and Tyr-164.

The protein belongs to the NAD(P)-dependent epimerase/dehydratase family. Dihydroflavonol-4-reductase subfamily. Monomer. Detected in roots, and at lower levels in root nodules. Not detected in petioles, leaf and stem.

The catalysed reaction is a (3R,4R)-4,2'-dihydroxyisoflavan + NADP(+) = a (3R)-2'-hydroxyisoflavanone + NADPH + H(+). Inhibited by vestitone concentrations above 50 uM. Stereospecific enzyme that catalyzes the NADPH-dependent reduction of (3R)-vestitone to (3R,4R)-4'-methoxyisoflavan-2',4,7-triol (DMI). Has no activity with (3S)-vestitone. Catalyzes the penultimate step in the biosynthesis of the phytoalexin medicarpin, and thereby contributes to plant defense reactions. The sequence is that of Vestitone reductase from Medicago sativa (Alfalfa).